We begin with the raw amino-acid sequence, 306 residues long: 4-hydroxybenzoate geranyltransferase 2 (306 aa).

Helical transmembrane passes span isoleucine 38 to glycine 58, proline 61 to isoleucine 81, leucine 119 to valine 139, isoleucine 153 to serine 173, glycine 178 to valine 198, isoleucine 229 to valine 249, isoleucine 251 to phenylalanine 271, and phenylalanine 285 to phenylalanine 305.

It belongs to the UbiA prenyltransferase family. Mg(2+) is required as a cofactor. As to expression, expressed only in roots.

It is found in the endoplasmic reticulum membrane. The enzyme catalyses 4-hydroxybenzoate + (2E)-geranyl diphosphate = 3-geranyl-4-hydroxybenzoate + diphosphate. Functionally, prenyltransferase involved in the biosynthesis of shikonin, a naphthoquinone secondary metabolite. Could accept only geranyl diphosphate and not dimethylallyl diphosphate, farnesyl diphosphate, or geranylgeranyl diphosphate as substrate. The protein is 4-hydroxybenzoate geranyltransferase 2 (PGT-2) of Lithospermum erythrorhizon (Purple gromwell).